A 211-amino-acid chain; its full sequence is Protein-L-isoaspartate O-methyltransferase (211 aa).

Residue serine 60 is part of the active site.

Belongs to the methyltransferase superfamily. L-isoaspartyl/D-aspartyl protein methyltransferase family.

The protein resides in the cytoplasm. The enzyme catalyses [protein]-L-isoaspartate + S-adenosyl-L-methionine = [protein]-L-isoaspartate alpha-methyl ester + S-adenosyl-L-homocysteine. Catalyzes the methyl esterification of L-isoaspartyl residues in peptides and proteins that result from spontaneous decomposition of normal L-aspartyl and L-asparaginyl residues. It plays a role in the repair and/or degradation of damaged proteins. The chain is Protein-L-isoaspartate O-methyltransferase from Hahella chejuensis (strain KCTC 2396).